Reading from the N-terminus, the 155-residue chain is Probable adenylyl-sulfate kinase (155 aa).

9 to 16 (GPSGAGKT) provides a ligand contact to ATP. Ser83 (phosphoserine intermediate) is an active-site residue. A disordered region spans residues 134 to 155 (LDGEYEEPENPEVVVDTDKNDR).

It belongs to the APS kinase family.

It carries out the reaction adenosine 5'-phosphosulfate + ATP = 3'-phosphoadenylyl sulfate + ADP + H(+). The protein operates within sulfur metabolism; hydrogen sulfide biosynthesis; sulfite from sulfate: step 2/3. In terms of biological role, catalyzes the synthesis of activated sulfate. The sequence is that of Probable adenylyl-sulfate kinase (cysC) from Archaeoglobus fulgidus (strain ATCC 49558 / DSM 4304 / JCM 9628 / NBRC 100126 / VC-16).